Here is a 55-residue protein sequence, read N- to C-terminus: Large ribosomal subunit protein bL33 (55 aa).

This sequence belongs to the bacterial ribosomal protein bL33 family.

In Blochmanniella pennsylvanica (strain BPEN), this protein is Large ribosomal subunit protein bL33.